The chain runs to 307 residues: Transposase InsD for insertion element IS2-9 (307 aa).

The Integrase catalytic domain occupies 112–295 (KPAVPPSKRA…SPREYLRQRA (184 aa)).

Its function is as follows. Involved in the transposition of the insertion sequence IS2. The protein is Transposase InsD for insertion element IS2-9 of Escherichia coli (strain K12).